We begin with the raw amino-acid sequence, 523 residues long: Cytokinin dehydrogenase 3 (523 aa).

The signal sequence occupies residues 1–31 (MASYNLRSQVRLIAITIVIIITLSTPITTNT). In terms of domain architecture, FAD-binding PCMH-type spans 66 to 243 (TKIFPSAVLI…TRARIKLEVA (178 aa)). Ala-100, Gly-102, and Gly-104 together coordinate FAD. Residue His-105 is modified to Pros-8alpha-FAD histidine. FAD-binding residues include Ser-106 and Gln-110. An N-linked (GlcNAc...) asparagine glycan is attached at Asn-153. FAD is bound by residues Asp-167, Thr-172, Ser-178, Ile-182, and Ile-233. An N-linked (GlcNAc...) asparagine glycan is attached at Asn-408. FAD is bound by residues Tyr-476, Ser-511, and Gln-514.

The protein belongs to the oxygen-dependent FAD-linked oxidoreductase family. It depends on FAD as a cofactor. In terms of tissue distribution, very weak expression in the young shoot tissues around two weeks after germination. Present in the center of the floral meristem and the boundary between long stamen primordia and gynoecial primordia.

The protein localises to the endoplasmic reticulum. It localises to the vacuole. It carries out the reaction N(6)-dimethylallyladenine + A + H2O = 3-methyl-2-butenal + adenine + AH2. Functionally, catalyzes the oxidation of cytokinins, a family of N(6)-substituted adenine derivatives that are plant hormones, where the substituent is an isopentenyl group. Catalyzes in vitro the oxidation of various types of cytokinin nucleotides that are known as direct products of cytokinin biosynthesis. In association with CKX5 regulates the activity of the reproductive meristems, flower organ size and ovule formation. The protein is Cytokinin dehydrogenase 3 (CKX3) of Arabidopsis thaliana (Mouse-ear cress).